A 663-amino-acid polypeptide reads, in one-letter code: UvrABC system protein B (663 aa).

One can recognise a Helicase ATP-binding domain in the interval 31–418 (DNIEGGEKAQ…TDTVVEQIIR (388 aa)). 44–51 (GATGTGKT) provides a ligand contact to ATP. The Beta-hairpin signature appears at 97–120 (YYDYYQPEAYVPSSDTYIEKDSSV). One can recognise a Helicase C-terminal domain in the interval 435–601 (QMDDLLGEIN…TIKKEIRDLI (167 aa)). The region spanning 627–662 (QAEIKALQQQMQEAAELLDFELAAQIRDVILELKAI) is the UVR domain.

The protein belongs to the UvrB family. Forms a heterotetramer with UvrA during the search for lesions. Interacts with UvrC in an incision complex.

It is found in the cytoplasm. The UvrABC repair system catalyzes the recognition and processing of DNA lesions. A damage recognition complex composed of 2 UvrA and 2 UvrB subunits scans DNA for abnormalities. Upon binding of the UvrA(2)B(2) complex to a putative damaged site, the DNA wraps around one UvrB monomer. DNA wrap is dependent on ATP binding by UvrB and probably causes local melting of the DNA helix, facilitating insertion of UvrB beta-hairpin between the DNA strands. Then UvrB probes one DNA strand for the presence of a lesion. If a lesion is found the UvrA subunits dissociate and the UvrB-DNA preincision complex is formed. This complex is subsequently bound by UvrC and the second UvrB is released. If no lesion is found, the DNA wraps around the other UvrB subunit that will check the other stand for damage. The protein is UvrABC system protein B of Streptococcus agalactiae serotype III (strain NEM316).